Consider the following 900-residue polypeptide: Phosphoenolpyruvate carboxylase (900 aa).

Active-site residues include histidine 140 and lysine 568.

The protein belongs to the PEPCase type 1 family. Mg(2+) is required as a cofactor.

The enzyme catalyses oxaloacetate + phosphate = phosphoenolpyruvate + hydrogencarbonate. In terms of biological role, forms oxaloacetate, a four-carbon dicarboxylic acid source for the tricarboxylic acid cycle. The polypeptide is Phosphoenolpyruvate carboxylase (Neisseria gonorrhoeae (strain ATCC 700825 / FA 1090)).